The chain runs to 417 residues: Probable secreted aspartic protease ARB_07536 (417 aa).

An N-terminal signal peptide occupies residues 1–20 (MRGILILVALGAATIPQASA). The 372-residue stretch at 42–413 (NTDLVTIGTP…DFEKNRVGLA (372 aa)) folds into the Peptidase A1 domain. Residues N74, N91, N100, N170, N276, and N314 are each glycosylated (N-linked (GlcNAc...) asparagine). The cysteines at positions 333 and 373 are disulfide-linked.

The protein belongs to the peptidase A1 family.

It is found in the secreted. Functionally, probable secreted aspartic protease that supplies the fungus with nutrient amino acids. May be able to degrade the selected host's proteins involved in the immune defense. The polypeptide is Probable secreted aspartic protease ARB_07536 (Arthroderma benhamiae (strain ATCC MYA-4681 / CBS 112371) (Trichophyton mentagrophytes)).